A 147-amino-acid polypeptide reads, in one-letter code: Large ribosomal subunit protein uL13 (147 aa).

This sequence belongs to the universal ribosomal protein uL13 family. In terms of assembly, part of the 50S ribosomal subunit.

In terms of biological role, this protein is one of the early assembly proteins of the 50S ribosomal subunit, although it is not seen to bind rRNA by itself. It is important during the early stages of 50S assembly. In Mycobacterium leprae (strain Br4923), this protein is Large ribosomal subunit protein uL13.